The following is a 212-amino-acid chain: HTH-type transcriptional repressor KstR (212 aa).

The span at 1-11 shows a compositional bias: low complexity; sequence MTTSSRSRSST. Positions 1–28 are disordered; that stretch reads MTTSSRSRSSTVAAATLGEDDLSSNAQK. One can recognise an HTH tetR-type domain in the interval 28–88; sequence KERRKRILDA…SALAREFERI (61 aa). The segment at residues 51 to 70 is a DNA-binding region (H-T-H motif); the sequence is QMRAVAERADVAVGTLYRYF.

As to quaternary structure, homodimer.

Its function is as follows. Controls the expression of genes used for utilizing diverse lipids as energy sources. This Rhodococcus jostii (strain RHA1) protein is HTH-type transcriptional repressor KstR (kstR).